Reading from the N-terminus, the 133-residue chain is ATP synthase epsilon chain, chloroplastic (133 aa).

It belongs to the ATPase epsilon chain family. F-type ATPases have 2 components, CF(1) - the catalytic core - and CF(0) - the membrane proton channel. CF(1) has five subunits: alpha(3), beta(3), gamma(1), delta(1), epsilon(1). CF(0) has three main subunits: a, b and c.

The protein localises to the plastid. It is found in the chloroplast thylakoid membrane. Produces ATP from ADP in the presence of a proton gradient across the membrane. The sequence is that of ATP synthase epsilon chain, chloroplastic from Gossypium barbadense (Sea Island cotton).